Here is a 160-residue protein sequence, read N- to C-terminus: Large ribosomal subunit protein uL16 (160 aa).

Positions 138 to 160 (KNLENSSQENTKDSKKSQEEVKQ) are disordered. A compositionally biased stretch (basic and acidic residues) spans 147–160 (NTKDSKKSQEEVKQ).

This sequence belongs to the universal ribosomal protein uL16 family. As to quaternary structure, part of the 50S ribosomal subunit.

In terms of biological role, binds 23S rRNA and is also seen to make contacts with the A and possibly P site tRNAs. The protein is Large ribosomal subunit protein uL16 of Prochlorococcus marinus (strain AS9601).